An 824-amino-acid polypeptide reads, in one-letter code: MVCPKVVILSEGADLDSLSAAYGVLKLYPDAYLLKPKHLSKKAGEVFKKYRDKFRVIEDLPDCFELVLVDTHFLPEGLPRERIKRIIVYDHHPIGDVKEFEGKIEKVGAATTLVVEEIKEKGIDINPRDATLLAFGIYEDTGNFTYEGTTPRDALALAFLLEKGANLREIREVVMETYTPEQIEAVGKIVQSIEKVFINGRQISFATAVLERYQPDINTLLYEIKDLKESDAFFVIIEAEGKTYVFGRSQSEDVDVGEILSHFGGGGHREAGAVKLENVSAERIKELIKAFLKRKYVKLKVRDIMNTPPFVLEEHVSVKDALTELSERGIANAPVINREGKLVGIISKKALLKLVKLYPDEPIELFVNRDFYTLSPDAPVWEAEEILTKFGQKLIPVVEDGTVVGVVTRLDILQAVKEDLEKLKEKRRKIKVPENIEEIAREVGQIAKEMGLRAYIVGGVVRDILLGKEVWDVDFVVEGNAIELAKELARRHGVNVHPFPEFGTAHLKIGKLKLEFATARRETYPRPGAYPKVEPASLKEDLIRRDFTINAMAISVNLEDYGTLIDYFGGLRDLKDKVIRVLHPVSFIEDPVRILRALRFAGRLNFKLSRSTEKLLKQAVNLGLLKEAPRGRLINEIKLALREDRFLEILELYRKYRVLEEIIEGFQWNEKVLQKLYALRKVVDWHALEFSEERIDYGWLYLLILISNLDYERGKHFLEEMSAPSWVRETYKFMKFKLGSLKEELKKAKENYEVYRLLKPLHTSVLLLLMLEEELKEKIKLYLEKLRKVKLPKEKIEELKKQGLKGKELGERIEELKREIMNKI.

2 consecutive CBS domains span residues 305 to 363 (MNTP…DEPI) and 367 to 423 (VNRD…LEKL). Position 459 to 462 (459 to 462 (GVVR)) interacts with ATP. Mg(2+)-binding residues include D472 and D474. ATP is bound by residues 545 to 546 (RD), N550, 590 to 599 (DPVRILRALR), R603, and R632.

This sequence belongs to the tRNA nucleotidyltransferase/poly(A) polymerase family. Mg(2+) is required as a cofactor.

It catalyses the reaction a tRNA with a 3' CC end + ATP = a tRNA with a 3' CCA end + diphosphate. Its function is as follows. tRNA nucleotidyltransferase involved in the synthesis of the tRNA CCA terminus. Adds the terminal adenosine residue to tRNA. Can incorporate CMP into tRNA ending with C74C75 (tRNACC), with very weak efficiency. The protein is A-adding tRNA nucleotidyltransferase of Aquifex aeolicus (strain VF5).